A 205-amino-acid polypeptide reads, in one-letter code: Holliday junction branch migration complex subunit RuvA (205 aa).

Positions Met1 to Ala64 are domain I. Positions Asn65 to Ile143 are domain II. The flexible linker stretch occupies residues Gly144–Gly152. Residues Ala153–Arg205 form a domain III region.

It belongs to the RuvA family. Homotetramer. Forms an RuvA(8)-RuvB(12)-Holliday junction (HJ) complex. HJ DNA is sandwiched between 2 RuvA tetramers; dsDNA enters through RuvA and exits via RuvB. An RuvB hexamer assembles on each DNA strand where it exits the tetramer. Each RuvB hexamer is contacted by two RuvA subunits (via domain III) on 2 adjacent RuvB subunits; this complex drives branch migration. In the full resolvosome a probable DNA-RuvA(4)-RuvB(12)-RuvC(2) complex forms which resolves the HJ.

It localises to the cytoplasm. Functionally, the RuvA-RuvB-RuvC complex processes Holliday junction (HJ) DNA during genetic recombination and DNA repair, while the RuvA-RuvB complex plays an important role in the rescue of blocked DNA replication forks via replication fork reversal (RFR). RuvA specifically binds to HJ cruciform DNA, conferring on it an open structure. The RuvB hexamer acts as an ATP-dependent pump, pulling dsDNA into and through the RuvAB complex. HJ branch migration allows RuvC to scan DNA until it finds its consensus sequence, where it cleaves and resolves the cruciform DNA. The sequence is that of Holliday junction branch migration complex subunit RuvA from Brucella anthropi (strain ATCC 49188 / DSM 6882 / CCUG 24695 / JCM 21032 / LMG 3331 / NBRC 15819 / NCTC 12168 / Alc 37) (Ochrobactrum anthropi).